The sequence spans 301 residues: 4-diphosphocytidyl-2-C-methyl-D-erythritol kinase (301 aa).

Residue lysine 18 is part of the active site. 109–119 is a binding site for ATP; sequence PIASGIGGGSA. Residue aspartate 151 is part of the active site.

It belongs to the GHMP kinase family. IspE subfamily.

The enzyme catalyses 4-CDP-2-C-methyl-D-erythritol + ATP = 4-CDP-2-C-methyl-D-erythritol 2-phosphate + ADP + H(+). The protein operates within isoprenoid biosynthesis; isopentenyl diphosphate biosynthesis via DXP pathway; isopentenyl diphosphate from 1-deoxy-D-xylulose 5-phosphate: step 3/6. Its function is as follows. Catalyzes the phosphorylation of the position 2 hydroxy group of 4-diphosphocytidyl-2C-methyl-D-erythritol. This Rhizobium meliloti (strain 1021) (Ensifer meliloti) protein is 4-diphosphocytidyl-2-C-methyl-D-erythritol kinase.